The primary structure comprises 397 residues: CCA-adding enzyme (397 aa).

ATP is bound by residues G27 and R30. Positions 27 and 30 each coordinate CTP. Residues D40 and D42 each contribute to the Mg(2+) site. R111, D154, R157, R160, and R163 together coordinate ATP. The CTP site is built by R111, D154, R157, R160, and R163.

The protein belongs to the tRNA nucleotidyltransferase/poly(A) polymerase family. Bacterial CCA-adding enzyme type 3 subfamily. As to quaternary structure, homodimer. Requires Mg(2+) as cofactor.

The enzyme catalyses a tRNA precursor + 2 CTP + ATP = a tRNA with a 3' CCA end + 3 diphosphate. It carries out the reaction a tRNA with a 3' CCA end + 2 CTP + ATP = a tRNA with a 3' CCACCA end + 3 diphosphate. In terms of biological role, catalyzes the addition and repair of the essential 3'-terminal CCA sequence in tRNAs without using a nucleic acid template. Adds these three nucleotides in the order of C, C, and A to the tRNA nucleotide-73, using CTP and ATP as substrates and producing inorganic pyrophosphate. Has no poly(A) polymerase activity. This is CCA-adding enzyme from Bacillus subtilis (strain 168).